Reading from the N-terminus, the 141-residue chain is Large ribosomal subunit protein uL11 (141 aa).

This sequence belongs to the universal ribosomal protein uL11 family. Part of the ribosomal stalk of the 50S ribosomal subunit. Interacts with L10 and the large rRNA to form the base of the stalk. L10 forms an elongated spine to which L12 dimers bind in a sequential fashion forming a multimeric L10(L12)X complex. Post-translationally, one or more lysine residues are methylated.

Functionally, forms part of the ribosomal stalk which helps the ribosome interact with GTP-bound translation factors. The polypeptide is Large ribosomal subunit protein uL11 (Synechococcus sp. (strain RCC307)).